The primary structure comprises 122 residues: Large ribosomal subunit protein uL14 (122 aa).

This sequence belongs to the universal ribosomal protein uL14 family. In terms of assembly, part of the 50S ribosomal subunit. Forms a cluster with proteins L3 and L19. In the 70S ribosome, L14 and L19 interact and together make contacts with the 16S rRNA in bridges B5 and B8.

Its function is as follows. Binds to 23S rRNA. Forms part of two intersubunit bridges in the 70S ribosome. In Kocuria rhizophila (strain ATCC 9341 / DSM 348 / NBRC 103217 / DC2201), this protein is Large ribosomal subunit protein uL14.